The following is a 56-amino-acid chain: Large ribosomal subunit protein bL33 (56 aa).

It belongs to the bacterial ribosomal protein bL33 family.

In Halorhodospira halophila (strain DSM 244 / SL1) (Ectothiorhodospira halophila (strain DSM 244 / SL1)), this protein is Large ribosomal subunit protein bL33.